We begin with the raw amino-acid sequence, 2376 residues long: Serine/threonine-protein kinase WNK1 (2376 aa).

Disordered regions lie at residues 1-78 (MSGG…EHRF) and 93-201 (ELPG…QQDD). 2 stretches are compositionally biased toward low complexity: residues 10 to 19 (SSPPGSLFLS) and 40 to 49 (GAAAADAGAG). A phosphoserine mark is found at serine 15 and serine 19. The segment covering 50–66 (RTEEYRRRRHTMDKDSR) has biased composition (basic and acidic residues). Threonine 60 is modified (phosphothreonine). A compositionally biased stretch (low complexity) spans 125-158 (TPAVAHVAQQPPAAATPGEPAAAVPAAASAPGSA). Phosphoserine is present on serine 172. The Protein kinase domain maps to 219–477 (LKFDIEIGRG…IKDLLNHAFF (259 aa)). Serine 229 is a binding site for ATP. 2 residues coordinate chloride: phenylalanine 281 and leucine 297. ATP is bound by residues 299–302 (TELM) and lysine 349. The active-site Proton acceptor is the aspartate 366. Residues leucine 367 and leucine 369 each coordinate chloride. Residues serine 376 and serine 380 each carry the phosphoserine; by autocatalysis modification. Positions 486–553 (ELAEEDDGEK…VCEGDHKTMA (68 aa)) are autoinhibitory domain. Residues 571 to 586 (QLVREEQEKRKQEESS) are compositionally biased toward basic and acidic residues. 3 disordered regions span residues 571–641 (QLVR…QLQY), 701–799 (AQPH…PVPT), and 1026–1118 (TTSS…SRPK). Low complexity-rich tracts occupy residues 587-601 (LKQQ…SQAG) and 614-624 (AAATTSASVST). Residues 627-637 (EPEEPEADQHQ) form an interaction with KLHL3 region. Residues 708–752 (PPSSMAQGQSQGQPSSSSLTGIPSSQPVQHSQQQQGVQQTAPSQQ) show a composition bias toward low complexity. The segment covering 753–766 (TVQYSLPQTSAPSE) has biased composition (polar residues). Residues 1045–1057 (PPEPVPAAPPQPT) show a composition bias toward pro residues. The span at 1079–1089 (SDGNENVPSSS) shows a compositional bias: polar residues. Positions 1097–1118 (IKRHYRKSVRSRSRHEKTSRPK) are enriched in basic residues. Positions 1257 to 1260 (RFIV) match the RFXV motif 1 motif. At serine 1261 the chain carries Phosphoserine. 2 disordered regions span residues 1459–1478 (STAA…VSGS) and 1734–1770 (STIP…PPSE). The span at 1746 to 1756 (SKPPSTKPPVL) shows a compositional bias: pro residues. The short motif at 1853–1856 (RFQV) is the RFXV motif 2 element. Positions 1862-1878 (DTQKEGKNKSEDVKSVH) are enriched in basic and acidic residues. The interval 1862–1942 (DTQKEGKNKS…QPTKVGRFQV (81 aa)) is disordered. The segment covering 1881 to 1899 (SSTSESSVLSSSSPESTLV) has biased composition (low complexity). 2 short sequence motifs (RFXV motif) span residues 1939–1942 (RFQV) and 1951–1954 (RFSV). Phosphoserine is present on residues serine 1972, serine 1996, serine 2005, serine 2006, serine 2021, serine 2023, and serine 2026. Disordered stretches follow at residues 1991–2033 (EKPE…LCSK) and 2110–2239 (AAAP…RKGT). Basic residues predominate over residues 2116–2128 (GRRRRPTKSKGSK). The segment covering 2129 to 2141 (SSRSSSLGNKSPG) has biased composition (low complexity). Polar residues-rich tracts occupy residues 2146–2161 (LSGQ…QQTL) and 2169–2193 (ETGQ…SAFT). Residues 2207–2223 (GQGTSSTNTVGGTVSSQ) show a composition bias toward low complexity. Residues 2224-2238 (AAQAQPPTMTSSRKG) show a composition bias toward polar residues. The amphipathic alpha-helix stretch occupies residues 2235–2255 (SRKGTFTDDLHKLVDNWARDA). Phosphoserine occurs at positions 2264, 2280, 2364, and 2366.

The protein belongs to the protein kinase superfamily. Ser/Thr protein kinase family. WNK subfamily. In terms of assembly, interacts with WNK3. Interacts with WNK4; inhibiting the activity of WNK4. Interacts with SGK1; promoting its activation. Associates with the mTORC2 complex. Interacts with UVRAG. Interacts (via amphipathic alpha-helix region) with EMC2; promoting the ER membrane protein complex assembly. Mg(2+) serves as cofactor. In terms of processing, autophosphorylated at Ser-376 and Ser-380, promoting its activity. Autophosphorylation at Ser-380 is inhibited by intracellular calcium. Phosphorylation at Thr-60 increases ability to activate SGK1. Ubiquitinated by the BCR(KLHL3) complex, leading to its degradation. Also ubiquitinated by the BCR(KLHL2) complex.

Its subcellular location is the cytoplasm. The protein resides in the nucleus. It is found in the cytoskeleton. It localises to the spindle. It carries out the reaction L-seryl-[protein] + ATP = O-phospho-L-seryl-[protein] + ADP + H(+). The enzyme catalyses L-threonyl-[protein] + ATP = O-phospho-L-threonyl-[protein] + ADP + H(+). Its activity is regulated as follows. Activated in response to hyperosmotic stress: cell shrinkage promotes formation of a membraneless compartment that concentrates WNK1 with its substrates, OXSR1/OSR1 and STK39/SPAK. Activation requires autophosphorylation of Ser-380 and, to a lower extent, Ser-376. Autophosphorylation and subsequent activation is inhibited by increases in intracellular ionic strength: Cl(-) potently inhibits WNK1 kinase activity via direct binding. Also inhibited by K(+) ions. Its function is as follows. Serine/threonine-protein kinase component of the WNK1-SPAK/OSR1 kinase cascade, which acts as a key regulator of blood pressure and regulatory volume increase by promoting ion influx. WNK1 mediates regulatory volume increase in response to hyperosmotic stress by acting as a molecular crowding sensor, which senses cell shrinkage and mediates formation of a membraneless compartment by undergoing liquid-liquid phase separation. The membraneless compartment concentrates WNK1 with its substrates, OXSR1/OSR1 and STK39/SPAK, promoting WNK1-dependent phosphorylation and activation of downstream kinases OXSR1/OSR1 and STK39/SPAK. Following activation, OXSR1/OSR1 and STK39/SPAK catalyze phosphorylation of ion cotransporters SLC12A1/NKCC2, SLC12A2/NKCC1, SLC12A5/KCC2 and SLC12A6/KCC3, regulating their activity. Phosphorylation of Na-K-Cl cotransporters SLC12A2/NKCC1 and SLC12A2/NKCC1 promote their activation and ion influx; simultaneously, phosphorylation of K-Cl cotransporters SLC12A5/KCC2 and SLC12A6/KCC3 inhibit their activity, blocking ion efflux. Also acts as a regulator of angiogenesis in endothelial cells via activation of OXSR1/OSR1 and STK39/SPAK: activation of OXSR1/OSR1 regulates chemotaxis and invasion, while STK39/SPAK regulates endothelial cell proliferation. Also acts independently of the WNK1-SPAK/OSR1 kinase cascade by catalyzing phosphorylation of other substrates, such as SYT2, PCF11 and NEDD4L. Mediates phosphorylation of SYT2, regulating SYT2 association with phospholipids and membrane-binding. Regulates mRNA export in the nucleus by mediating phosphorylation of PCF11, thereby decreasing the association between PCF11 and POLR2A/RNA polymerase II and promoting mRNA export to the cytoplasm. Acts as a negative regulator of autophagy. Required for the abscission step during mitosis, independently of the WNK1-SPAK/OSR1 kinase cascade. May also play a role in actin cytoskeletal reorganization. Also acts as a scaffold protein independently of its protein kinase activity: negatively regulates cell membrane localization of various transporters and channels, such as SLC4A4, SLC26A6, SLC26A9, TRPV4 and CFTR. Involved in the regulation of epithelial Na(+) channel (ENaC) by promoting activation of SGK1 in a kinase-independent manner: probably acts as a scaffold protein that promotes the recruitment of SGK1 to the mTORC2 complex in response to chloride, leading to mTORC2-dependent phosphorylation and activation of SGK1. Acts as an assembly factor for the ER membrane protein complex independently of its protein kinase activity: associates with EMC2 in the cytoplasm via its amphipathic alpha-helix, and prevents EMC2 ubiquitination and subsequent degradation, thereby promoting EMC2 stabilization. The protein is Serine/threonine-protein kinase WNK1 of Sus scrofa (Pig).